Here is a 469-residue protein sequence, read N- to C-terminus: Repressible acid phosphatase (469 aa).

Positions methionine 1–alanine 16 are cleaved as a signal peptide. N-linked (GlcNAc...) asparagine glycans are attached at residues asparagine 23 and asparagine 31. Histidine 77 (nucleophile) is an active-site residue. Asparagine 129, asparagine 201, asparagine 229, asparagine 250, and asparagine 317 each carry an N-linked (GlcNAc...) asparagine glycan. Aspartate 340 (proton donor) is an active-site residue. N-linked (GlcNAc...) asparagine glycosylation is found at asparagine 392 and asparagine 447.

It belongs to the histidine acid phosphatase family. Glycosylated during secretion across the membrane.

It is found in the secreted. It carries out the reaction a phosphate monoester + H2O = an alcohol + phosphate. This is Repressible acid phosphatase (PHO5) from Kluyveromyces lactis (strain ATCC 8585 / CBS 2359 / DSM 70799 / NBRC 1267 / NRRL Y-1140 / WM37) (Yeast).